The sequence spans 134 residues: Holo-[acyl-carrier-protein] synthase (134 aa).

Positions 8 and 57 each coordinate Mg(2+).

The protein belongs to the P-Pant transferase superfamily. AcpS family. Mg(2+) serves as cofactor.

It is found in the cytoplasm. The catalysed reaction is apo-[ACP] + CoA = holo-[ACP] + adenosine 3',5'-bisphosphate + H(+). In terms of biological role, transfers the 4'-phosphopantetheine moiety from coenzyme A to a Ser of acyl-carrier-protein. This chain is Holo-[acyl-carrier-protein] synthase, found in Rhizobium leguminosarum bv. trifolii (strain WSM2304).